Here is a 504-residue protein sequence, read N- to C-terminus: Anaerobic nitric oxide reductase transcription regulator NorR (504 aa).

4-aspartylphosphate is present on Asp-57. Positions 187 to 416 (MIGLSPGMTQ…LEHAIHRAVV (230 aa)) constitute a Sigma-54 factor interaction domain. Residues 215–222 (GETGTGKE) and 278–287 (ADNGTLFLDE) contribute to the ATP site. The segment at residues 479 to 498 (WAACARMLETDVANLHRLAK) is a DNA-binding region (H-T-H motif).

Its pathway is nitrogen metabolism; nitric oxide reduction. Required for the expression of anaerobic nitric oxide (NO) reductase, acts as a transcriptional activator for at least the norVW operon. Activation also requires sigma-54. This chain is Anaerobic nitric oxide reductase transcription regulator NorR, found in Escherichia coli O6:K15:H31 (strain 536 / UPEC).